The chain runs to 954 residues: Valine--tRNA ligase (954 aa).

The 'HIGH' region motif lies at 48-58; that stretch reads PNVTGSLHMGH. The short motif at 560–564 is the 'KMSKS' region element; it reads KMSKS. Lys563 is a binding site for ATP. Residues 883-954 adopt a coiled-coil conformation; sequence AGFINKEAEL…QTQYQAIENL (72 aa).

The protein belongs to the class-I aminoacyl-tRNA synthetase family. ValS type 1 subfamily. As to quaternary structure, monomer.

Its subcellular location is the cytoplasm. It carries out the reaction tRNA(Val) + L-valine + ATP = L-valyl-tRNA(Val) + AMP + diphosphate. In terms of biological role, catalyzes the attachment of valine to tRNA(Val). As ValRS can inadvertently accommodate and process structurally similar amino acids such as threonine, to avoid such errors, it has a 'posttransfer' editing activity that hydrolyzes mischarged Thr-tRNA(Val) in a tRNA-dependent manner. The polypeptide is Valine--tRNA ligase (Actinobacillus pleuropneumoniae serotype 3 (strain JL03)).